We begin with the raw amino-acid sequence, 747 residues long: Endopolyphosphatase (747 aa).

A topological domain (cytoplasmic) is located at residue Met-1. Residues 2–22 (LPKTLTIWASLASLAVAQSGQ) form a helical; Signal-anchor for type II membrane protein membrane-spanning segment. The Vacuolar portion of the chain corresponds to 23–747 (VVFAKNADGK…AEYLEEPDDD (725 aa)). Residues Asn-134, Asn-191, and Asn-463 are each glycosylated (N-linked (GlcNAc...) asparagine). Residues 570–640 (AVATSSEPES…PKFPKDLQPG (71 aa)) are disordered. Positions 577–586 (PESDDYDSDL) are enriched in acidic residues. Residues 591–625 (KKGKKKGKKGKKGKKGKKGKKKKGKKGKKGKKGKR) are compositionally biased toward basic residues. Basic and acidic residues predominate over residues 626-635 (DKSMPPKFPK). A glycan (N-linked (GlcNAc...) asparagine) is linked at Asn-659.

It belongs to the endopolyphosphatase PPN1 family. Requires a divalent metal cation as cofactor. Post-translationally, processing by proteases in the vacuole may be required for activation.

It localises to the vacuole membrane. It catalyses the reaction [phosphate](n+1) + n H2O = (n+1) phosphate + n H(+). Its function is as follows. Catalyzes the hydrolysis of inorganic polyphosphate (polyP) chains of many hundreds of phosphate residues into shorter lengths. In Yarrowia lipolytica (strain CLIB 122 / E 150) (Yeast), this protein is Endopolyphosphatase (PPN1).